Consider the following 251-residue polypeptide: Probable transcriptional regulatory protein TGRD_462 (251 aa).

Belongs to the TACO1 family.

It localises to the cytoplasm. The sequence is that of Probable transcriptional regulatory protein TGRD_462 from Endomicrobium trichonymphae.